The following is a 134-amino-acid chain: Cytochrome b5 isoform B (134 aa).

The Cytochrome b5 heme-binding domain occupies 5-81; that stretch reads AKIFTLSEVS…MEQYYVGEID (77 aa). Heme contacts are provided by His-40 and His-64. Residues 107-127 traverse the membrane as a helical segment; it reads FIIKLLQFLVPLAILGLAVGI.

Belongs to the cytochrome b5 family. As to quaternary structure, interacts with CER1, FAH1, FAH2 and BI-1.

Its subcellular location is the endoplasmic reticulum membrane. Functionally, membrane bound hemoprotein which function as an electron carrier for several membrane bound oxygenases, including fatty acid desaturases. This is Cytochrome b5 isoform B from Arabidopsis thaliana (Mouse-ear cress).